The following is a 269-amino-acid chain: Thiazole synthase (269 aa).

The Schiff-base intermediate with DXP role is filled by K95. Residues G156, 182-183 (AG), and 204-205 (NT) contribute to the 1-deoxy-D-xylulose 5-phosphate site.

Belongs to the ThiG family. In terms of assembly, homotetramer. Forms heterodimers with either ThiH or ThiS.

The protein localises to the cytoplasm. It carries out the reaction [ThiS sulfur-carrier protein]-C-terminal-Gly-aminoethanethioate + 2-iminoacetate + 1-deoxy-D-xylulose 5-phosphate = [ThiS sulfur-carrier protein]-C-terminal Gly-Gly + 2-[(2R,5Z)-2-carboxy-4-methylthiazol-5(2H)-ylidene]ethyl phosphate + 2 H2O + H(+). The protein operates within cofactor biosynthesis; thiamine diphosphate biosynthesis. Catalyzes the rearrangement of 1-deoxy-D-xylulose 5-phosphate (DXP) to produce the thiazole phosphate moiety of thiamine. Sulfur is provided by the thiocarboxylate moiety of the carrier protein ThiS. In vitro, sulfur can be provided by H(2)S. The protein is Thiazole synthase of Shewanella frigidimarina (strain NCIMB 400).